A 330-amino-acid chain; its full sequence is Aspartate--ammonia ligase (330 aa).

The protein belongs to the class-II aminoacyl-tRNA synthetase family. AsnA subfamily.

It localises to the cytoplasm. The enzyme catalyses L-aspartate + NH4(+) + ATP = L-asparagine + AMP + diphosphate + H(+). Its pathway is amino-acid biosynthesis; L-asparagine biosynthesis; L-asparagine from L-aspartate (ammonia route): step 1/1. The chain is Aspartate--ammonia ligase from Shigella flexneri serotype 5b (strain 8401).